We begin with the raw amino-acid sequence, 203 residues long: Tic20 family protein Ycf60 (203 aa).

5 helical membrane passes run 2-22 (IRLF…RLAL), 51-71 (TVPY…YVLP), 84-104 (IILP…VTFF), 131-151 (ILLF…PIEF), and 153-173 (ISFL…STIT).

This sequence belongs to the Tic20 family.

The protein resides in the plastid. The protein localises to the chloroplast membrane. The polypeptide is Tic20 family protein Ycf60 (ycf60) (Pyropia yezoensis (Susabi-nori)).